Consider the following 156-residue polypeptide: MARRRRAEVRPVQPDLVYQDVLVSAMINRIMRDGKKNLASRIFYGACRLVQERTGQEPLKVFKQAYDNVKPRVEVRSRRVGGSTYQVPVEVGPRRQQSLTLRWMISAVDGRPERTAIERLAGEIMDAAQGRGGAIKKKDDVERMAEANRAYAHYRW.

The protein belongs to the universal ribosomal protein uS7 family. As to quaternary structure, part of the 30S ribosomal subunit. Contacts proteins S9 and S11.

In terms of biological role, one of the primary rRNA binding proteins, it binds directly to 16S rRNA where it nucleates assembly of the head domain of the 30S subunit. Is located at the subunit interface close to the decoding center, probably blocks exit of the E-site tRNA. The polypeptide is Small ribosomal subunit protein uS7 (Deinococcus radiodurans (strain ATCC 13939 / DSM 20539 / JCM 16871 / CCUG 27074 / LMG 4051 / NBRC 15346 / NCIMB 9279 / VKM B-1422 / R1)).